Consider the following 328-residue polypeptide: NADH-quinone oxidoreductase subunit H (328 aa).

Helical transmembrane passes span 10–30 (IIKI…GTYF), 80–100 (IAPV…PFLP), 118–138 (IGIL…LLGG), 155–175 (AVFI…IMMV), 191–211 (ITSW…IAAF), 243–263 (LFFI…SLLF), 272–292 (LLGA…FLWT), and 306–326 (WLCW…TAIV).

Belongs to the complex I subunit 1 family. As to quaternary structure, NDH-1 is composed of 14 different subunits. Subunits NuoA, H, J, K, L, M, N constitute the membrane sector of the complex.

The protein localises to the cell inner membrane. The enzyme catalyses a quinone + NADH + 5 H(+)(in) = a quinol + NAD(+) + 4 H(+)(out). Functionally, NDH-1 shuttles electrons from NADH, via FMN and iron-sulfur (Fe-S) centers, to quinones in the respiratory chain. The immediate electron acceptor for the enzyme in this species is believed to be ubiquinone. Couples the redox reaction to proton translocation (for every two electrons transferred, four hydrogen ions are translocated across the cytoplasmic membrane), and thus conserves the redox energy in a proton gradient. This subunit may bind ubiquinone. This Sulfurimonas denitrificans (strain ATCC 33889 / DSM 1251) (Thiomicrospira denitrificans (strain ATCC 33889 / DSM 1251)) protein is NADH-quinone oxidoreductase subunit H.